We begin with the raw amino-acid sequence, 58 residues long: Lantibiotic macedovicin (58 aa).

A propeptide spanning residues 1–25 is cleaved from the precursor; it reads MMNATENQIFVETVSDQELEMLIGG. 2 positions are modified to 2,3-didehydrobutyrine: threonine 33 and threonine 35. 2 cross-links (beta-methyllanthionine (Thr-Cys)) span residues 33-38 and 35-57; these read TLTKDC and TKDC…CKNC. Residues cysteine 46 and cysteine 54 are joined by a disulfide bond.

Maturation of macedovicin involves the enzymatic dehydration of Thr-33 and Thr-35 into dehydrobutyrine residues, that can form a beta-methyllanthionine bond with Cys-38 and Cys-57, respectively. This is followed by membrane translocation and cleavage of the modified precursor.

The protein localises to the secreted. Functionally, lanthionine-containing peptide antibiotic (lantibiotic) active on Gram-positive bacteria. Macedovicin inhibits a broad spectrum of lactic acid bacteria, several food spoilage species (e.g. Clostridium spp.) and oral streptococci. The bactericidal activity of lantibiotics is based on depolarization of energized bacterial cytoplasmic membranes, initiated by the formation of aqueous transmembrane pores. The sequence is that of Lantibiotic macedovicin from Streptococcus macedonicus (strain ACA-DC 198).